The primary structure comprises 977 residues: RNA-binding protein 15 (977 aa).

Composition is skewed to basic and acidic residues over residues Met-1–Pro-10, Arg-35–Pro-52, Arg-59–Lys-72, and Leu-98–Asp-113. Residues Met-1 to Ala-167 form a disordered region. At Ser-109 the chain carries Phosphoserine. Over residues Ser-119 to Ser-130 the composition is skewed to low complexity. The segment covering Ser-135–Glu-150 has biased composition (gly residues). The segment covering Ser-151–Ala-160 has biased composition (low complexity). The 83-residue stretch at Lys-170 to Val-252 folds into the RRM 1 domain. A phosphoserine mark is found at Ser-179, Ser-208, and Ser-210. Lys-246 is covalently cross-linked (Glycyl lysine isopeptide (Lys-Gly) (interchain with G-Cter in SUMO2)). Phosphoserine occurs at positions 253, 257, and 259. The tract at residues Arg-256–Ala-298 is disordered. The residue at position 266 (Tyr-266) is a Phosphotyrosine. Residues Ser-292, Ser-294, and Ser-365 each carry the phosphoserine modification. RRM domains follow at residues Arg-374 to Ala-451 and Thr-455 to Thr-529. Glycyl lysine isopeptide (Lys-Gly) (interchain with G-Cter in SUMO2) cross-links involve residues Lys-406, Lys-420, and Lys-445. At Lys-450 the chain carries N6-acetyllysine. Composition is skewed to basic and acidic residues over residues His-555–Tyr-581 and Ser-613–Arg-661. The segment at His-555–Ala-778 is disordered. Thr-568 carries the post-translational modification Phosphothreonine. Residue Arg-578 is modified to Asymmetric dimethylarginine; alternate; by PRMT1. Omega-N-methylarginine; alternate; by PRMT1 is present on Arg-578. Phosphoserine is present on residues Ser-622, Ser-656, Ser-670, Ser-674, Ser-700, and Ser-741. Composition is skewed to basic and acidic residues over residues Arg-673 to Asp-728 and Ser-741 to Asp-750. Residue Lys-744 forms a Glycyl lysine isopeptide (Lys-Gly) (interchain with G-Cter in SUMO2) linkage. Residues Ser-752–Asp-771 are compositionally biased toward polar residues. Phosphoserine is present on residues Ser-765, Ser-767, and Ser-781. The 180-residue stretch at Val-777–Phe-956 folds into the SPOC domain. Positions Gly-865–Thr-884 are disordered. The span at Ser-866 to Thr-884 shows a compositional bias: low complexity. The residue at position 935 (Ser-935) is a Phosphoserine.

It belongs to the RRM Spen family. Component of the WMM complex, a N6-methyltransferase complex composed of a catalytic subcomplex, named MAC, and of an associated subcomplex, named MACOM. The MAC subcomplex is composed of METTL3 and METTL14. The MACOM subcomplex is composed of WTAP, ZC3H13, CBLL1/HAKAI, VIRMA, and, in some cases of RBM15 (RBM15 or RBM15B). Also a component of a MACOM-like complex, named WTAP complex, composed of WTAP, ZC3H13, CBLL1, VIRMA, RBM15, BCLAF1 and THRAP3. Interacts with RBPJ. Interacts (via SPOC domain) with SETD1B. Interacts with NXF1, the interaction is required to promote mRNA export. Interacts with SF3B1. In terms of assembly, (Microbial infection) Interacts with Epstein-Barr virus BSFL2/BMLF1. Post-translationally, methylated at Arg-578 by PRMT1, leading to promote ubiquitination by CNOT4 and subsequent degradation by the proteasome. Ubiquitinated by CNOT4 following methylation at Arg-578 by PRMT1.

It localises to the nucleus speckle. Its subcellular location is the nucleus. It is found in the nucleoplasm. The protein localises to the nucleus envelope. The protein resides in the nucleus membrane. In terms of biological role, RNA-binding protein that acts as a key regulator of N6-methyladenosine (m6A) methylation of RNAs, thereby regulating different processes, such as hematopoietic cell homeostasis, alternative splicing of mRNAs and X chromosome inactivation mediated by Xist RNA. Associated component of the WMM complex, a complex that mediates N6-methyladenosine (m6A) methylation of RNAs, a modification that plays a role in the efficiency of mRNA splicing and RNA processing. Plays a key role in m6A methylation, possibly by binding target RNAs and recruiting the WMM complex. Involved in random X inactivation mediated by Xist RNA: acts by binding Xist RNA and recruiting the WMM complex, which mediates m6A methylation, leading to target YTHDC1 reader on Xist RNA and promoting transcription repression activity of Xist. Required for the development of multiple tissues, such as the maintenance of the homeostasis of long-term hematopoietic stem cells and for megakaryocyte (MK) and B-cell differentiation. Regulates megakaryocyte differentiation by regulating alternative splicing of genes important for megakaryocyte differentiation; probably regulates alternative splicing via m6A regulation. Required for placental vascular branching morphogenesis and embryonic development of the heart and spleen. Acts as a regulator of thrombopoietin response in hematopoietic stem cells by regulating alternative splicing of MPL. May also function as an mRNA export factor, stimulating export and expression of RTE-containing mRNAs which are present in many retrotransposons that require to be exported prior to splicing. High affinity binding of pre-mRNA to RBM15 may allow targeting of the mRNP to the export helicase DBP5 in a manner that is independent of splicing-mediated NXF1 deposition, resulting in export prior to splicing. May be implicated in HOX gene regulation. In Homo sapiens (Human), this protein is RNA-binding protein 15.